Here is a 385-residue protein sequence, read N- to C-terminus: 1-deoxy-D-xylulose 5-phosphate reductoisomerase (385 aa).

Residues Thr-10, Gly-11, Ser-12, Ile-13, Lys-37, and Asn-124 each contribute to the NADPH site. A 1-deoxy-D-xylulose 5-phosphate-binding site is contributed by Lys-125. Glu-126 contacts NADPH. Asp-150 contacts Mn(2+). 1-deoxy-D-xylulose 5-phosphate contacts are provided by Ser-151, Glu-152, Ser-176, and His-199. Residue Glu-152 coordinates Mn(2+). NADPH is bound at residue Gly-205. 1-deoxy-D-xylulose 5-phosphate-binding residues include Ser-212, Asn-217, Lys-218, and Glu-221. Glu-221 provides a ligand contact to Mn(2+).

This sequence belongs to the DXR family. Mg(2+) serves as cofactor. Mn(2+) is required as a cofactor.

It catalyses the reaction 2-C-methyl-D-erythritol 4-phosphate + NADP(+) = 1-deoxy-D-xylulose 5-phosphate + NADPH + H(+). It participates in isoprenoid biosynthesis; isopentenyl diphosphate biosynthesis via DXP pathway; isopentenyl diphosphate from 1-deoxy-D-xylulose 5-phosphate: step 1/6. In terms of biological role, catalyzes the NADPH-dependent rearrangement and reduction of 1-deoxy-D-xylulose-5-phosphate (DXP) to 2-C-methyl-D-erythritol 4-phosphate (MEP). The chain is 1-deoxy-D-xylulose 5-phosphate reductoisomerase from Clostridium botulinum (strain Kyoto / Type A2).